A 319-amino-acid polypeptide reads, in one-letter code: Ankyrin repeat domain-containing protein 1 (319 aa).

Residues 63 to 89 are a coiled coil; the sequence is EKEREAELKKKKLEQRSKLENLEDLEI. 5 ANK repeats span residues 152 to 181, 185 to 214, 218 to 247, 251 to 280, and 284 to 315; these read YKRT…QIEF, LEST…KISA, LLST…DLNA, EGDT…DLNV, and AGKT…KASR.

Interacts with TTN/titin and YBX1. Expressed in heart. In postnatal neonatal heart, it is expressed in an asymmetrical way; left ventricle favored towards right ventricle. Whether or not this could be correlated with a hypertrophic heart is still a matter of debate. Levels increase gradually from newborn to adult.

It is found in the nucleus. Its function is as follows. May play an important role in endothelial cell activation. May act as a nuclear transcription factor that negatively regulates the expression of cardiac genes. The polypeptide is Ankyrin repeat domain-containing protein 1 (ANKRD1) (Sus scrofa (Pig)).